The primary structure comprises 132 residues: Probable prefoldin subunit 4 (132 aa).

It belongs to the prefoldin subunit beta family. Heterohexamer of two PFD-alpha type and four PFD-beta type subunits.

Its function is as follows. Binds specifically to cytosolic chaperonin (c-CPN) and transfers target proteins to it. Binds to nascent polypeptide chain and promotes folding in an environment in which there are many competing pathways for nonnative proteins. The sequence is that of Probable prefoldin subunit 4 (pfdn4) from Dictyostelium discoideum (Social amoeba).